A 271-amino-acid polypeptide reads, in one-letter code: Ferric enterobactin transport ATP-binding protein FepC (271 aa).

The region spanning 8–244 is the ABC transporter domain; the sequence is LRGEQLTLGY…ELIERIYGLR (237 aa). An ATP-binding site is contributed by 40–47; the sequence is GPNGCGKS.

Belongs to the ABC transporter superfamily. In terms of assembly, the complex is composed of two ATP-binding proteins (FepC), two transmembrane proteins (FepD and FepG) and a solute-binding protein (FepB).

Its subcellular location is the cell inner membrane. It carries out the reaction Fe(III)-enterobactin(out) + ATP + H2O = Fe(III)-enterobactin(in) + ADP + phosphate + H(+). Its function is as follows. Part of the ABC transporter complex FepBDGC involved in ferric enterobactin uptake. Responsible for energy coupling to the transport system. This chain is Ferric enterobactin transport ATP-binding protein FepC (fepC), found in Escherichia coli (strain K12).